The sequence spans 505 residues: MITLTGHTLTIEEMKRLLLEGEGVTACPNSMQKVAECREVVEKIVEDGKVVYGITTGFGKFSDVLIQKDDVKALQHNLIQSHACGIGDPFPEEVSRGMLILRANTMLKGVSGVRPLVVNMLLEFVNRKIHPVVPQQGSLGASGDLAPLSHLALVLLGEGEVFYKGKRVHAMVALTEEGLEPIELEAKEGLALINGTQAMTAQGVLSYIEAEATSYQAELIASMTIEGLQGIIDAFDENVHKARGYKEQVEVASRIRDILHDSKLTTKQGELRVQDAYSLRCIPQVHGASWQVLNYVKEKLEIEMNAATDNPLIFDGGEKVISGGNFHGQPIAFAMDFLKVGMAELANISERRIERLVNPQLNDLPPFLSPEPGLQSGAMIMQYAAASLVSENKTLAHPASVDSIPSSANQEDHVSMGTIASRHAHQIIQNVRRVLSVEMICAMQAAEYRGIENMSTVTKSFYHQGRQQVPSITNDRIFSTDIENITHWLKTNYSIKERLDVNAAL.

A cross-link (5-imidazolinone (Ala-Gly)) is located at residues 141–143 (ASG). Residue serine 142 is modified to 2,3-didehydroalanine (Ser).

Belongs to the PAL/histidase family. In terms of processing, contains an active site 4-methylidene-imidazol-5-one (MIO), which is formed autocatalytically by cyclization and dehydration of residues Ala-Ser-Gly.

The protein localises to the cytoplasm. The enzyme catalyses L-histidine = trans-urocanate + NH4(+). The protein operates within amino-acid degradation; L-histidine degradation into L-glutamate; N-formimidoyl-L-glutamate from L-histidine: step 1/3. The chain is Histidine ammonia-lyase from Bacillus cereus (strain 03BB102).